The sequence spans 536 residues: Zinc finger protein 394 (536 aa).

Residues Ala18 to Lys45 form a disordered region. Lys20 is covalently cross-linked (Glycyl lysine isopeptide (Lys-Gly) (interchain with G-Cter in SUMO2)). The segment covering Pro26–Glu41 has biased composition (polar residues). The region spanning Arg44–Leu126 is the SCAN box domain. The 62-residue stretch at Ala135 to Ser196 folds into the KRAB domain. Residues Lys207 and Lys260 each participate in a glycyl lysine isopeptide (Lys-Gly) (interchain with G-Cter in SUMO2) cross-link. C2H2-type zinc fingers lie at residues Tyr328–His350, Tyr356–His378, and Tyr384–His406. A C2H2-type 4; atypical zinc finger spans residues Cys412 to His433. Residue Lys413 forms a Glycyl lysine isopeptide (Lys-Gly) (interchain with G-Cter in SUMO2) linkage. 3 consecutive C2H2-type zinc fingers follow at residues His439 to His461, Tyr467 to His489, and Tyr495 to His517.

This sequence belongs to the krueppel C2H2-type zinc-finger protein family.

The protein localises to the nucleus. May be involved in transcriptional regulation. The polypeptide is Zinc finger protein 394 (Znf394) (Rattus norvegicus (Rat)).